A 559-amino-acid chain; its full sequence is (-)-drimenol synthase (559 aa).

Mg(2+)-binding residues include Asp311, Asp315, Asp456, Ser460, and Glu464. The DDXXD motif signature appears at 311 to 315 (DDIYD).

This sequence belongs to the terpene synthase family. Mg(2+) is required as a cofactor.

The catalysed reaction is (2E,6E)-farnesyl diphosphate + H2O = (5S,9S,10S)-drim-7-en-11-ol + diphosphate. The protein operates within secondary metabolite biosynthesis; terpenoid biosynthesis. Its function is as follows. Catalyzes the conversion of (2E,6E)-farnesyl diphosphate (FPP) into drimenol, a precursor of the sesquiterpenoid polygodial. Polygodial has been shown to be an antifeedant for a number of herbivorous insects. The sequence is that of (-)-drimenol synthase from Persicaria hydropiper (Marshpepper knotweed).